The primary structure comprises 462 residues: Protoheme IX farnesyltransferase, mitochondrial (462 aa).

The transit peptide at 1–30 directs the protein to the mitochondrion; it reads MSYFPRTYAHLMRNVLAHNKGNIYLQIGTQ. Transmembrane regions (helical) follow at residues 158–178, 234–254, 274–294, 298–318, 352–372, 373–393, and 425–445; these read TILV…PASV, LIGT…VAIL, IINT…GWAA, LSHP…FPHF, YSIL…TDWY, YQID…KFYW, and FMAS…HKKG.

The protein belongs to the UbiA prenyltransferase family. Forms ~370 kDa homooligomeric complexes.

It localises to the mitochondrion. It is found in the mitochondrion membrane. It carries out the reaction heme b + (2E,6E)-farnesyl diphosphate + H2O = Fe(II)-heme o + diphosphate. Its pathway is porphyrin-containing compound metabolism; heme O biosynthesis; heme O from protoheme: step 1/1. Positively regulated by the hydroxylated intermediate (heme I) formed at the subsequent step, or by HAS/COX15 itself. Functionally, catalyzes the first reaction in the biosynthesis of heme A, a prosthetic group of mitochondrial cytochrome c oxidase (CcO). Heme A is synthesized from heme B by two sequential enzymatic reactions catalyzed by heme O synthase (HOS/COX10) and heme A synthase (HAS/COX15). HOS converts heme B (protoheme IX) to heme O by substitution of the vinyl group on carbon 2 of heme B porphyrin ring with a hydroxyethyl farnesyl side group. The chain is Protoheme IX farnesyltransferase, mitochondrial (COX10) from Saccharomyces cerevisiae (strain ATCC 204508 / S288c) (Baker's yeast).